Reading from the N-terminus, the 977-residue chain is ELMO domain-containing protein A (977 aa).

In terms of domain architecture, ELMO spans Glu-383 to Leu-561. Low complexity-rich tracts occupy residues Ser-792–Gly-838 and Gln-852–Ser-897. Residues Ser-792–Pro-899 are disordered.

Associates with mhcA.

Functionally, functions as a negative regulator of actin polymerization. Modulates actin/myosin II at cortex actinomyosins to prevent excessive F-actin polymerization around the cell periphery, thereby maintaining proper cell shape during phagocytosis and chemotaxis. This Dictyostelium discoideum (Social amoeba) protein is ELMO domain-containing protein A (elmoA).